Consider the following 474-residue polypeptide: tRNA-2-methylthio-N(6)-dimethylallyladenosine synthase (474 aa).

In terms of domain architecture, MTTase N-terminal spans 3-120 (KKLHIKTWGC…LPEMINSVRG (118 aa)). Positions 12, 49, 83, 157, 161, and 164 each coordinate [4Fe-4S] cluster. The region spanning 143–375 (RAEGPTAFVS…QERINQQAMA (233 aa)) is the Radical SAM core domain. Positions 378 to 441 (RRMLGTTQRI…PNSLRGKVVR (64 aa)) constitute a TRAM domain.

It belongs to the methylthiotransferase family. MiaB subfamily. In terms of assembly, monomer. The cofactor is [4Fe-4S] cluster.

It is found in the cytoplasm. The catalysed reaction is N(6)-dimethylallyladenosine(37) in tRNA + (sulfur carrier)-SH + AH2 + 2 S-adenosyl-L-methionine = 2-methylsulfanyl-N(6)-dimethylallyladenosine(37) in tRNA + (sulfur carrier)-H + 5'-deoxyadenosine + L-methionine + A + S-adenosyl-L-homocysteine + 2 H(+). Its function is as follows. Catalyzes the methylthiolation of N6-(dimethylallyl)adenosine (i(6)A), leading to the formation of 2-methylthio-N6-(dimethylallyl)adenosine (ms(2)i(6)A) at position 37 in tRNAs that read codons beginning with uridine. This Shigella boydii serotype 4 (strain Sb227) protein is tRNA-2-methylthio-N(6)-dimethylallyladenosine synthase.